The chain runs to 203 residues: V-type ATP synthase subunit D (203 aa).

Belongs to the V-ATPase D subunit family.

Produces ATP from ADP in the presence of a proton gradient across the membrane. In Streptococcus pneumoniae serotype 19F (strain G54), this protein is V-type ATP synthase subunit D.